The sequence spans 1049 residues: Ataxin-2-like protein (1049 aa).

An N-acetylmethionine modification is found at M1. The interval 1–54 is disordered; it reads MLKPQPPQQTSQPQQPPPTQQAVARRSPGGTSPPNGGLPGPLTATAAPPGPPAA. S27 is modified (phosphoserine). T45 carries the post-translational modification Phosphothreonine. The tract at residues 96-119 is interaction with MPL; it reads SVRGQTTGKGPPQSPVFEGVYNNS. S109 is subject to Phosphoserine. Phosphotyrosine is present on Y116. A Sm domain is found at 120-197; the sequence is RMLHFLTAVV…VLLVHFRNVD (78 aa). Position 205 is an N6-acetyllysine (K205). S236 bears the Phosphoserine mark. Y262 carries the phosphotyrosine modification. Residue S304 is modified to Phosphoserine. Residue Y307 is modified to Phosphotyrosine. Residues 314-326 show a composition bias toward basic and acidic residues; sequence ENDDGRTEEEKHS. Disordered regions lie at residues 314–522, 554–573, 578–704, 736–772, 824–852, 868–944, and 999–1049; these read ENDD…RNLE, QFKL…FPSR, EAKG…LTAG, VSNS…PMMQ, SNPR…AEQP, HATQ…SSFP, and PQGH…PPGN. Positions 328 to 340 are enriched in polar residues; sequence VQRQGSGRESPSL. 2 positions are modified to phosphoserine: S333 and S337. A Glycyl lysine isopeptide (Lys-Gly) (interchain with G-Cter in SUMO2) cross-link involves residue K346. Phosphotyrosine is present on Y347. R359 is modified (asymmetric dimethylarginine). The segment covering 361–378 has biased composition (low complexity); that stretch reads GVRCSSSRGGRPGLSSLP. S389, S407, and S453 each carry phosphoserine. The segment covering 454-466 has biased composition (low complexity); it reads PKSAAPAPVSASC. Polar residues predominate over residues 475-487; the sequence is VASSASIPVTSSV. Residues S496 and S499 each carry the phosphoserine modification. Positions 508 to 519 are enriched in basic and acidic residues; that stretch reads DVKELPTKEPSR. S560, S561, and S562 each carry phosphoserine. Residues 578 to 587 are compositionally biased toward basic and acidic residues; that stretch reads EAKGKEKEVD. S597 carries the phosphoserine modification. T635 is modified (phosphothreonine). S637, S677, S683, and S687 each carry phosphoserine. Residues 681–697 show a composition bias toward low complexity; sequence STSTPTSPGPRTHSTPS. 2 stretches are compositionally biased toward polar residues: residues 824-845 and 878-902; these read SNPR…STPQ and QPAT…QHQA. Positions 935-944 are enriched in low complexity; sequence SAQSPQSSFP. Residues 1033-1042 show a composition bias toward polar residues; it reads QVQSHPSQQL.

The protein belongs to the ataxin-2 family. As to quaternary structure, interacts with MPL/TPOR and EPOR and dissociates after ligand stimulation. Interacts with DDX6, G3BP, and ATXN2. Interacts with PRMT1. Interacts with CIC and ATXN1. Thrombopoietin triggers the phosphorylation on tyrosine residues in a way that is dependent on MPL C-terminal domain. Post-translationally, asymmetrically dimethylated. Probably methylated by PRMT1. Expressed in cerebellum.

It localises to the membrane. It is found in the cytoplasm. Its subcellular location is the nucleus speckle. The protein resides in the cytoplasmic granule. Functionally, involved in the regulation of stress granule and P-body formation. The chain is Ataxin-2-like protein (Atxn2l) from Mus musculus (Mouse).